Consider the following 319-residue polypeptide: Formimidoylglutamase (319 aa).

His131, Asp154, His156, Asp158, Cys248, and Asp250 together coordinate Mn(2+).

This sequence belongs to the arginase family. It depends on Mn(2+) as a cofactor.

The catalysed reaction is N-formimidoyl-L-glutamate + H2O = formamide + L-glutamate. It participates in amino-acid degradation; L-histidine degradation into L-glutamate; L-glutamate from N-formimidoyl-L-glutamate (hydrolase route): step 1/1. In terms of biological role, catalyzes the conversion of N-formimidoyl-L-glutamate to L-glutamate and formamide. This is Formimidoylglutamase from Legionella pneumophila (strain Lens).